A 537-amino-acid polypeptide reads, in one-letter code: Quadr-hydrophobin (537 aa).

The N-terminal stretch at 1 to 17 (MKFITVAAALFASTSLA) is a signal peptide. Hydrophobin regions lie at residues 63-199 (GGNP…QNPI), 200-299 (GGNP…ENPT), 300-421 (GGNP…QDPL), and 422-537 (GGNP…RAII). Asn70 and Asn113 each carry an N-linked (GlcNAc...) asparagine glycan. 16 disulfide bridges follow: Cys134/Cys183, Cys144/Cys174, Cys145/Cys157, Cys184/Cys195, Cys234/Cys283, Cys244/Cys274, Cys245/Cys257, Cys284/Cys295, Cys356/Cys405, Cys366/Cys396, Cys367/Cys379, Cys406/Cys417, Cys471/Cys520, Cys481/Cys511, Cys482/Cys494, and Cys521/Cys532.

The protein belongs to the cerato-ulmin hydrophobin family. In terms of assembly, homotetramer. Further self-assembles to form highly ordered films at water-air interfaces through intermolecular interactions.

The protein localises to the secreted. It is found in the cell wall. In terms of biological role, aerial growth, conidiation, and dispersal of filamentous fungi in the environment rely upon a capability of their secreting small amphipathic proteins called hydrophobins (HPBs) with low sequence identity. Class I can self-assemble into an outermost layer of rodlet bundles on aerial cell surfaces, conferring cellular hydrophobicity that supports fungal growth, development and dispersal; whereas Class II form highly ordered films at water-air interfaces through intermolecular interactions but contribute nothing to the rodlet structure. This chain is Quadr-hydrophobin, found in Cordyceps militaris (Caterpillar fungus).